The primary structure comprises 207 residues: uncharacterized protein (207 aa).

Disordered regions lie at residues 1–81 (MNPT…GNTR) and 140–169 (TSQS…PPKK). Over residues 21–40 (FEQTNSSASLTQKNSSSETE) the composition is skewed to polar residues. Residues 58–70 (PTKRGSGRGRGRS) show a composition bias toward basic residues. Residues 140 to 152 (TSQSIDAQPTPSQ) are compositionally biased toward polar residues. The segment covering 156–165 (AHHEPHEKRG) has biased composition (basic and acidic residues).

Its subcellular location is the nucleus. It localises to the nucleolus. This is an uncharacterized protein from Schizosaccharomyces pombe (strain 972 / ATCC 24843) (Fission yeast).